Here is a 589-residue protein sequence, read N- to C-terminus: UvrABC system protein C (589 aa).

A GIY-YIG domain is found at 14–91 (HKPGCYLWKD…IAKYKPKYNM (78 aa)).

This sequence belongs to the UvrC family. Interacts with UvrB in an incision complex.

The protein localises to the cytoplasm. Functionally, the UvrABC repair system catalyzes the recognition and processing of DNA lesions. UvrC both incises the 5' and 3' sides of the lesion. The N-terminal half is responsible for the 3' incision and the C-terminal half is responsible for the 5' incision. This chain is UvrABC system protein C, found in Malacoplasma penetrans (strain HF-2) (Mycoplasma penetrans).